Here is a 398-residue protein sequence, read N- to C-terminus: Fe-regulated protein 8 (398 aa).

Protein of unknown function; part of the gene cluster that mediates the biosynthesis of siderophore ferrichrome A which is contributing to organismal virulence. This Mycosarcoma maydis (Corn smut fungus) protein is Fe-regulated protein 8.